The chain runs to 92 residues: uncharacterized protein (92 aa).

This is an uncharacterized protein from Haemophilus influenzae (strain ATCC 51907 / DSM 11121 / KW20 / Rd).